The chain runs to 628 residues: tRNA uridine 5-carboxymethylaminomethyl modification enzyme MnmG (628 aa).

13–18 is an FAD binding site; it reads GAGHAG. NAD(+) is bound at residue 273-287; that stretch reads GPRYCPSIEDKIVRF.

The protein belongs to the MnmG family. In terms of assembly, homodimer. Heterotetramer of two MnmE and two MnmG subunits. The cofactor is FAD.

It is found in the cytoplasm. Its function is as follows. NAD-binding protein involved in the addition of a carboxymethylaminomethyl (cmnm) group at the wobble position (U34) of certain tRNAs, forming tRNA-cmnm(5)s(2)U34. The sequence is that of tRNA uridine 5-carboxymethylaminomethyl modification enzyme MnmG from Buchnera aphidicola subsp. Acyrthosiphon pisum (strain APS) (Acyrthosiphon pisum symbiotic bacterium).